Here is a 122-residue protein sequence, read N- to C-terminus: Phosphoribosyl-ATP pyrophosphatase (122 aa).

This sequence belongs to the PRA-PH family.

It localises to the cytoplasm. It catalyses the reaction 1-(5-phospho-beta-D-ribosyl)-ATP + H2O = 1-(5-phospho-beta-D-ribosyl)-5'-AMP + diphosphate + H(+). It participates in amino-acid biosynthesis; L-histidine biosynthesis; L-histidine from 5-phospho-alpha-D-ribose 1-diphosphate: step 2/9. The protein is Phosphoribosyl-ATP pyrophosphatase of Cupriavidus metallidurans (strain ATCC 43123 / DSM 2839 / NBRC 102507 / CH34) (Ralstonia metallidurans).